The primary structure comprises 1167 residues: DNA-directed RNA polymerase subunit beta (1167 aa).

It belongs to the RNA polymerase beta chain family. As to quaternary structure, the RNAP catalytic core consists of 2 alpha, 1 beta, 1 beta' and 1 omega subunit. When a sigma factor is associated with the core the holoenzyme is formed, which can initiate transcription.

The enzyme catalyses RNA(n) + a ribonucleoside 5'-triphosphate = RNA(n+1) + diphosphate. DNA-dependent RNA polymerase catalyzes the transcription of DNA into RNA using the four ribonucleoside triphosphates as substrates. This Treponema denticola (strain ATCC 35405 / DSM 14222 / CIP 103919 / JCM 8153 / KCTC 15104) protein is DNA-directed RNA polymerase subunit beta.